The chain runs to 159 residues: MRIGHGFDVHKFGGEGPVIIGGVSVPYEQGLIAHSDGDVALHALCDALLGAIAEGDIGRHFPDTDDKWKGADSRALLRDVYRRVKEKGLELGNADVTIIAQAPKMAPHIKHMCAAIAEDLETSLDNVNVKATTSEGLGFTGRKEGIACEAVVLLVKKSY.

The a divalent metal cation site is built by Asp8 and His10. 4-CDP-2-C-methyl-D-erythritol 2-phosphate is bound by residues 8-10 (DVH) and 34-35 (HS). His42 lines the a divalent metal cation pocket. 4-CDP-2-C-methyl-D-erythritol 2-phosphate-binding positions include 56 to 58 (DIG), 61 to 65 (FPDTD), 100 to 106 (AQAPKMA), 132 to 135 (TTSE), Phe139, and Arg142.

Belongs to the IspF family. As to quaternary structure, homotrimer. A divalent metal cation serves as cofactor.

The enzyme catalyses 4-CDP-2-C-methyl-D-erythritol 2-phosphate = 2-C-methyl-D-erythritol 2,4-cyclic diphosphate + CMP. Its pathway is isoprenoid biosynthesis; isopentenyl diphosphate biosynthesis via DXP pathway; isopentenyl diphosphate from 1-deoxy-D-xylulose 5-phosphate: step 4/6. Functionally, involved in the biosynthesis of isopentenyl diphosphate (IPP) and dimethylallyl diphosphate (DMAPP), two major building blocks of isoprenoid compounds. Catalyzes the conversion of 4-diphosphocytidyl-2-C-methyl-D-erythritol 2-phosphate (CDP-ME2P) to 2-C-methyl-D-erythritol 2,4-cyclodiphosphate (ME-CPP) with a corresponding release of cytidine 5-monophosphate (CMP). The chain is 2-C-methyl-D-erythritol 2,4-cyclodiphosphate synthase from Aliivibrio salmonicida (strain LFI1238) (Vibrio salmonicida (strain LFI1238)).